Consider the following 397-residue polypeptide: MNEQFRQALSVIETLKRHGHEAYFVGGAVRDYLLQRPIGDIDIATSAHPQEVMAIFPRTVPVGIAHGTVMVIERGISYEVTTFRKEGRYEDYRRPKDVTFVRSLNEDLQRRDFTMNAIAMNEYGEIIDPFGGVEALKQRIIETVGDPAERFNEDALRMMRALRFVSQLGFSLSTETKQAIIRYGHLLQHIAVERIAVEFEKLLLGPFVSKAIALLVETNLFAYLPELATKKEELIKLSSYSLVPVDRIEAWARFAFVVHFHREQLKNWKLSNHLIRDILICLKALEHIRSLTDWTIDALYEYGPYIPHIERIRAAVYDDKPSVHSLLKQWEMLPIRNRKELAINGHDLLILFGKKGGPWLSEMIENIERAVLHRQVENEKEKLKEWAMCNQKRENNC.

2 residues coordinate ATP: G27 and R30. CTP contacts are provided by G27 and R30. Mg(2+) is bound by residues D40 and D42. ATP-binding residues include R111, D154, R157, R160, and R163. R111, D154, R157, R160, and R163 together coordinate CTP.

Belongs to the tRNA nucleotidyltransferase/poly(A) polymerase family. Bacterial CCA-adding enzyme type 3 subfamily. In terms of assembly, homodimer. Mg(2+) serves as cofactor.

The enzyme catalyses a tRNA precursor + 2 CTP + ATP = a tRNA with a 3' CCA end + 3 diphosphate. It catalyses the reaction a tRNA with a 3' CCA end + 2 CTP + ATP = a tRNA with a 3' CCACCA end + 3 diphosphate. Catalyzes the addition and repair of the essential 3'-terminal CCA sequence in tRNAs without using a nucleic acid template. Adds these three nucleotides in the order of C, C, and A to the tRNA nucleotide-73, using CTP and ATP as substrates and producing inorganic pyrophosphate. tRNA 3'-terminal CCA addition is required both for tRNA processing and repair. Also involved in tRNA surveillance by mediating tandem CCA addition to generate a CCACCA at the 3' terminus of unstable tRNAs. While stable tRNAs receive only 3'-terminal CCA, unstable tRNAs are marked with CCACCA and rapidly degraded. The chain is CCA-adding enzyme from Anoxybacillus flavithermus (strain DSM 21510 / WK1).